The sequence spans 425 residues: CAAX prenyl protease 1 homolog (425 aa).

5 consecutive transmembrane segments (helical) span residues 3–23, 62–80, 109–129, 155–175, and 188–208; these read LPYLEAVLCFMILMYIFETYL, FHFIHEAVTILMDTTILYY, LAFLAGVMIWSQITDLPFSLY, GILLSILLGPPIVAAIIIIVQ, and FMFALSLVMMTIYPIVIAPLF. Residue H284 coordinates Zn(2+). Residue E285 is part of the active site. H288 provides a ligand contact to Zn(2+). 2 helical membrane-spanning segments follow: residues 295-315 and 332-352; these read VYSFVAVQLLMFLQFGGYTLV and VIIGLIIFQHTIIPVQHLLSF. Residue E362 coordinates Zn(2+). D366 acts as the Proton donor in catalysis.

It belongs to the peptidase M48A family. Requires Zn(2+) as cofactor.

The protein resides in the endoplasmic reticulum membrane. The catalysed reaction is Hydrolyzes the peptide bond -P2-(S-farnesyl or geranylgeranyl)C-P1'-P2'-P3'-COOH where P1' and P2' are amino acids with aliphatic side chains and P3' is any C-terminal residue.. In terms of biological role, proteolytically removes the C-terminal three residues of farnesylated proteins. This Oryza sativa subsp. japonica (Rice) protein is CAAX prenyl protease 1 homolog (FACE1).